Here is a 255-residue protein sequence, read N- to C-terminus: tRNA (guanine-N(1)-)-methyltransferase (255 aa).

S-adenosyl-L-methionine is bound by residues G117 and 137–142 (IGDYVL).

The protein belongs to the RNA methyltransferase TrmD family. In terms of assembly, homodimer.

It is found in the cytoplasm. The catalysed reaction is guanosine(37) in tRNA + S-adenosyl-L-methionine = N(1)-methylguanosine(37) in tRNA + S-adenosyl-L-homocysteine + H(+). Specifically methylates guanosine-37 in various tRNAs. In Chromobacterium violaceum (strain ATCC 12472 / DSM 30191 / JCM 1249 / CCUG 213 / NBRC 12614 / NCIMB 9131 / NCTC 9757 / MK), this protein is tRNA (guanine-N(1)-)-methyltransferase.